A 282-amino-acid polypeptide reads, in one-letter code: MEMO1 family protein Msm_1438 (282 aa).

The protein belongs to the MEMO1 family.

This chain is MEMO1 family protein Msm_1438, found in Methanobrevibacter smithii (strain ATCC 35061 / DSM 861 / OCM 144 / PS).